Consider the following 418-residue polypeptide: 3-isopropylmalate dehydratase large subunit (418 aa).

Residues C297, C357, and C360 each contribute to the [4Fe-4S] cluster site.

Belongs to the aconitase/IPM isomerase family. LeuC type 2 subfamily. In terms of assembly, heterodimer of LeuC and LeuD. The cofactor is [4Fe-4S] cluster.

The enzyme catalyses (2R,3S)-3-isopropylmalate = (2S)-2-isopropylmalate. Its pathway is amino-acid biosynthesis; L-leucine biosynthesis; L-leucine from 3-methyl-2-oxobutanoate: step 2/4. Functionally, catalyzes the isomerization between 2-isopropylmalate and 3-isopropylmalate, via the formation of 2-isopropylmaleate. The chain is 3-isopropylmalate dehydratase large subunit from Elusimicrobium minutum (strain Pei191).